We begin with the raw amino-acid sequence, 208 residues long: MKVKICGVTHPDDAWEAAKAGADYVGMIFAKDSQRCVTKETAKCIVEAIRDGGSEPVGVFSEHSIGEIIAISSATGITSIQLSGRNIDFKFSQLRELFSIFYVVSVYSNGQPSAAIPPMSNTVTVIYDHIGGERGTPFDWRAFSPFQHDNWMLGGGVNPGNVGEAVRLLSPRGIDVSSGVERPGVLRKDVTLMQALIDSAKGVGNLTS.

This sequence belongs to the TrpF family.

The catalysed reaction is N-(5-phospho-beta-D-ribosyl)anthranilate = 1-(2-carboxyphenylamino)-1-deoxy-D-ribulose 5-phosphate. Its pathway is amino-acid biosynthesis; L-tryptophan biosynthesis; L-tryptophan from chorismate: step 3/5. The sequence is that of N-(5'-phosphoribosyl)anthranilate isomerase (trpF) from Chlamydia muridarum (strain MoPn / Nigg).